The chain runs to 833 residues: Multiphosphoryl transfer protein 2 (833 aa).

Positions 2 to 91 constitute an HPr domain; sequence ALIVEFICEL…QWLRDEFPHC (90 aa). Residue H16 is the Tele-phosphohistidine intermediate; for HPr activity of the active site. H16 bears the Phosphohistidine; by EI mark. Residues 143–653 form a PTS EI region; it reads LGNLPAAKGV…AAKARMAQLD (511 aa). Catalysis depends on H301, which acts as the Tele-phosphohistidine intermediate; for PTS EI activity. A Phosphohistidine; by autocatalysis modification is found at H301. 2 residues coordinate phosphoenolpyruvate: R408 and R444. Mg(2+) contacts are provided by E543 and D567. Residues 566-567 and R577 each bind phosphoenolpyruvate; that span reads ND. C614 acts as the Proton donor; for EI activity in catalysis. The region spanning 688–830 is the PTS EIIA type-2 domain; the sequence is PLVTAECITL…DAIASLLQHE (143 aa). H750 (tele-phosphohistidine intermediate; for PTS EIIA activity) is an active-site residue. At H750 the chain carries Phosphohistidine; by HPr.

It belongs to the PEP-utilizing enzyme family. Mg(2+) is required as a cofactor.

It localises to the cytoplasm. It catalyses the reaction L-histidyl-[protein] + phosphoenolpyruvate = N(pros)-phospho-L-histidyl-[protein] + pyruvate. The enzyme catalyses D-fructose(out) + N(pros)-phospho-L-histidyl-[protein] = D-fructose 1-phosphate(in) + L-histidyl-[protein]. Functionally, multifunctional protein that includes general (non sugar-specific) and sugar-specific components of the phosphoenolpyruvate-dependent sugar phosphotransferase system (sugar PTS). This major carbohydrate active transport system catalyzes the phosphorylation of incoming sugar substrates concomitantly with their translocation across the cell membrane. The enzyme II FrwABC PTS system is involved in fructose transport. This is Multiphosphoryl transfer protein 2 from Escherichia coli (strain K12).